Consider the following 1044-residue polypeptide: Disease resistance protein PIK6-NP (1044 aa).

The interval 3 to 184 (LAVGASEATM…PQIVSIKEPV (182 aa)) is structured coiled coil (CC) domain. Residues 187 to 543 (KTVMENLEKW…IAEGFATEKQ (357 aa)) enclose the NB-ARC domain. The interval 258–302 (QVSKQEEAGGSTESSSRDENTREPQGSSSTSSREENTAESGTKRM) is disordered. 3 LRR repeats span residues 635–657 (LAQV…SFNY), 682–705 (MLVL…IEKL), and 706–728 (EYLE…VGQL). The segment at 737 to 771 (GNKNTRKGLRLPQEKRNKAMKNPSPQGKTKEPAEK) is disordered. LRR repeat units follow at residues 808-834 (LTGL…LLSS), 840-862 (SCGL…LYNM), 866-888 (PRYL…ITSI), 889-911 (TTLN…ILRN), 935-958 (KGIL…EFKS), and 980-1004 (MPAL…ILEN).

It belongs to the disease resistance NB-LRR family.

Probable disease resistance protein. Resistance proteins guard the plant against pathogens that contain an appropriate avirulence protein via an indirect interaction with this avirulence protein. That triggers a defense system including the hypersensitive response, which restricts the pathogen growth. At the opposite of cultivar Kusabue, the cultivar Nipponbare doesn't recognize the effector avirulence protein AVR-Pik from M.oryzae. The protein is Disease resistance protein PIK6-NP of Oryza sativa subsp. japonica (Rice).